We begin with the raw amino-acid sequence, 778 residues long: Protein translocase subunit SecA 2 (778 aa).

ATP is bound by residues Q94, G112–T116, and D501.

It belongs to the SecA family. As to quaternary structure, monomer and homodimer. Part of the essential Sec protein translocation apparatus which comprises SecA, SecYEG and auxiliary proteins SecDF. Other proteins may also be involved.

Its subcellular location is the cell membrane. The protein localises to the cytoplasm. It catalyses the reaction ATP + H2O + cellular proteinSide 1 = ADP + phosphate + cellular proteinSide 2.. In terms of biological role, part of the Sec protein translocase complex. Interacts with the SecYEG preprotein conducting channel. Has a central role in coupling the hydrolysis of ATP to the transfer of proteins into and across the cell membrane, serving as an ATP-driven molecular motor driving the stepwise translocation of polypeptide chains across the membrane. The protein is Protein translocase subunit SecA 2 of Mycobacterium leprae (strain TN).